Consider the following 699-residue polypeptide: Elongation factor G (699 aa).

The tr-type G domain occupies 10-292 (DRTRNIGIMA…AVIDYLPSPT (283 aa)). GTP contacts are provided by residues 19 to 26 (AHIDAGKT), 90 to 94 (DTPGH), and 144 to 147 (NKMD).

The protein belongs to the TRAFAC class translation factor GTPase superfamily. Classic translation factor GTPase family. EF-G/EF-2 subfamily.

Its subcellular location is the cytoplasm. Catalyzes the GTP-dependent ribosomal translocation step during translation elongation. During this step, the ribosome changes from the pre-translocational (PRE) to the post-translocational (POST) state as the newly formed A-site-bound peptidyl-tRNA and P-site-bound deacylated tRNA move to the P and E sites, respectively. Catalyzes the coordinated movement of the two tRNA molecules, the mRNA and conformational changes in the ribosome. The polypeptide is Elongation factor G (Coxiella burnetii (strain Dugway 5J108-111)).